The chain runs to 629 residues: tRNA uridine 5-carboxymethylaminomethyl modification enzyme MnmG (629 aa).

FAD-binding positions include 13-18 (GGGHAG), V125, and S180. 273–287 (GPRYCPSIEDKVMRF) contributes to the NAD(+) binding site. Residue Q370 coordinates FAD.

It belongs to the MnmG family. Homodimer. Heterotetramer of two MnmE and two MnmG subunits. FAD is required as a cofactor.

The protein localises to the cytoplasm. Its function is as follows. NAD-binding protein involved in the addition of a carboxymethylaminomethyl (cmnm) group at the wobble position (U34) of certain tRNAs, forming tRNA-cmnm(5)s(2)U34. The sequence is that of tRNA uridine 5-carboxymethylaminomethyl modification enzyme MnmG from Shigella sonnei (strain Ss046).